A 260-amino-acid chain; its full sequence is Flagellar basal-body rod protein FlgG (260 aa).

It belongs to the flagella basal body rod proteins family. The basal body constitutes a major portion of the flagellar organelle and consists of four rings (L,P,S, and M) mounted on a central rod. The rod consists of about 26 subunits of FlgG in the distal portion, and FlgB, FlgC and FlgF are thought to build up the proximal portion of the rod with about 6 subunits each.

The protein localises to the bacterial flagellum basal body. This is Flagellar basal-body rod protein FlgG (flgG) from Buchnera aphidicola subsp. Acyrthosiphon pisum (strain APS) (Acyrthosiphon pisum symbiotic bacterium).